A 126-amino-acid polypeptide reads, in one-letter code: MREEEAAAVVTVPQAGRDGEQPGPPAGLGCAAVRGEPGGGGPQESRKQWKKFLYCEPHKRIKEVLEEELYIKRDECHIKHPPAVALEGIWSIKRNLPVGGLKPGLQSRNSLLPQAKYYSRHGGLRR.

Positions 1–46 (MREEEAAAVVTVPQAGRDGEQPGPPAGLGCAAVRGEPGGGGPQESR) are disordered.

It is found in the cytoplasm. Its subcellular location is the cytoskeleton. The protein resides in the cilium basal body. This is an uncharacterized protein from Bos taurus (Bovine).